The chain runs to 984 residues: Probable translation initiation factor IF-2 (984 aa).

The 122-residue stretch at 94-215 (VNGWYSVTVT…LPLLLLRFGI (122 aa)) folds into the DOD-type homing endonuclease domain. A tr-type G domain is found at 391-608 (TTETHNFVAN…LIAGLSQKYL (218 aa)). GTP-binding positions include 464 to 468 (DTPGH) and 518 to 521 (NKID).

This sequence belongs to the TRAFAC class translation factor GTPase superfamily. Classic translation factor GTPase family. IF-2 subfamily. This protein undergoes a protein self splicing that involves a post-translational excision of the intervening region (intein) followed by peptide ligation.

Functionally, function in general translation initiation by promoting the binding of the formylmethionine-tRNA to ribosomes. Seems to function along with eIF-2. The polypeptide is Probable translation initiation factor IF-2 (infB) (Pyrococcus furiosus (strain ATCC 43587 / DSM 3638 / JCM 8422 / Vc1)).